The primary structure comprises 101 residues: Small ribosomal subunit protein uS14 (101 aa).

The protein belongs to the universal ribosomal protein uS14 family. In terms of assembly, part of the 30S ribosomal subunit. Contacts proteins S3 and S10.

Binds 16S rRNA, required for the assembly of 30S particles and may also be responsible for determining the conformation of the 16S rRNA at the A site. This chain is Small ribosomal subunit protein uS14, found in Enterobacter sp. (strain 638).